The following is a 361-amino-acid chain: D-alanine--D-alanine ligase (361 aa).

The 211-residue stretch at 134 to 344 (KLLLKSFDIP…FKDLVDNLID (211 aa)) folds into the ATP-grasp domain. 167–222 (KEVLGYPVIVKPAVLGSSIGINVAYSENQIESFIKEALKYDLTIVIEKFIEAREIE) is an ATP binding site. Positions 297, 311, and 313 each coordinate Mg(2+).

It belongs to the D-alanine--D-alanine ligase family. Requires Mg(2+) as cofactor. Mn(2+) serves as cofactor.

It is found in the cytoplasm. The catalysed reaction is 2 D-alanine + ATP = D-alanyl-D-alanine + ADP + phosphate + H(+). The protein operates within cell wall biogenesis; peptidoglycan biosynthesis. In terms of biological role, cell wall formation. In Borreliella burgdorferi (strain ZS7) (Borrelia burgdorferi), this protein is D-alanine--D-alanine ligase.